The sequence spans 204 residues: Urease accessory protein UreG (204 aa).

A GTP-binding site is contributed by 11 to 18 (GPVGAGKH).

It belongs to the SIMIBI class G3E GTPase family. UreG subfamily. Homodimer. UreD, UreF and UreG form a complex that acts as a GTP-hydrolysis-dependent molecular chaperone, activating the urease apoprotein by helping to assemble the nickel containing metallocenter of UreC. The UreE protein probably delivers the nickel.

It localises to the cytoplasm. Functionally, facilitates the functional incorporation of the urease nickel metallocenter. This process requires GTP hydrolysis, probably effectuated by UreG. This is Urease accessory protein UreG from Staphylococcus xylosus.